A 428-amino-acid chain; its full sequence is Phosphoribosylamine--glycine ligase (428 aa).

Residues 107-313 (KQVMKTYNIP…LVNVIESLLD (207 aa)) form the ATP-grasp domain. 133 to 194 (VEAEGVPIVI…EEYLEGEELS (62 aa)) provides a ligand contact to ATP. 2 residues coordinate Mg(2+): Glu283 and Asn285.

Belongs to the GARS family. Requires Mg(2+) as cofactor. The cofactor is Mn(2+).

The catalysed reaction is 5-phospho-beta-D-ribosylamine + glycine + ATP = N(1)-(5-phospho-beta-D-ribosyl)glycinamide + ADP + phosphate + H(+). The protein operates within purine metabolism; IMP biosynthesis via de novo pathway; N(1)-(5-phospho-D-ribosyl)glycinamide from 5-phospho-alpha-D-ribose 1-diphosphate: step 2/2. The sequence is that of Phosphoribosylamine--glycine ligase from Halalkalibacterium halodurans (strain ATCC BAA-125 / DSM 18197 / FERM 7344 / JCM 9153 / C-125) (Bacillus halodurans).